The sequence spans 389 residues: 5-hydroxytryptamine receptor 1B (389 aa).

Over methionine 1–leucine 45 the chain is Extracellular. N-linked (GlcNAc...) asparagine glycans are attached at residues asparagine 24 and asparagine 31. A helical membrane pass occupies residues proline 46–alanine 71. The Cytoplasmic segment spans residues threonine 72–tyrosine 85. The chain crosses the membrane as a helical span at residues leucine 86–valine 110. The Extracellular portion of the chain corresponds to threonine 111 to glutamine 118. The chain crosses the membrane as a helical span at residues alanine 119–leucine 144. Cysteine 121 and cysteine 198 are disulfide-bonded. Ergotamine-binding residues include aspartate 128 and threonine 133. A DRY motif; important for ligand-induced conformation changes and signaling motif is present at residues aspartate 145 to tyrosine 147. Residues aspartate 145–arginine 164 lie on the Cytoplasmic side of the membrane. The chain crosses the membrane as a helical span at residues alanine 165–proline 183. Residues phenylalanine 184–histidine 204 lie on the Extracellular side of the membrane. Valine 200 contacts ergotamine. The helical transmembrane segment at valine 205–glycine 228 threads the bilayer. The Cytoplasmic portion of the chain corresponds to arginine 229 to threonine 314. A helical transmembrane segment spans residues leucine 315–methionine 336. The Extracellular portion of the chain corresponds to proline 337–histidine 346. Residues methionine 347 to threonine 369 form a helical membrane-spanning segment. Residues asparagine 364 to tyrosine 368 carry the NPxxY motif; important for ligand-induced conformation changes and signaling motif. The Cytoplasmic portion of the chain corresponds to methionine 370 to threonine 389. Cysteine 387 carries S-palmitoyl cysteine lipidation.

Belongs to the G-protein coupled receptor 1 family. In terms of assembly, homodimer. Heterodimer with HTR1D. In terms of processing, phosphorylated. Desensitization of the receptor may be mediated by its phosphorylation. Palmitoylated.

The protein resides in the cell membrane. In terms of biological role, G-protein coupled receptor for 5-hydroxytryptamine (serotonin). Also functions as a receptor for ergot alkaloid derivatives, various anxiolytic and antidepressant drugs and other psychoactive substances, such as lysergic acid diethylamide (LSD). Ligand binding causes a conformation change that triggers signaling via guanine nucleotide-binding proteins (G proteins) and modulates the activity of downstream effectors, such as adenylate cyclase. HTR1B is coupled to G(i)/G(o) G alpha proteins and mediates inhibitory neurotransmission by inhibiting adenylate cyclase activity. Arrestin family members inhibit signaling via G proteins and mediate activation of alternative signaling pathways. Regulates the release of 5-hydroxytryptamine, dopamine and acetylcholine in the brain, and thereby affects neural activity, nociceptive processing, pain perception, mood and behavior. Besides, plays a role in vasoconstriction of cerebral arteries. This is 5-hydroxytryptamine receptor 1B (HTR1B) from Cavia porcellus (Guinea pig).